The following is a 177-amino-acid chain: Large ribosomal subunit protein uL6 (177 aa).

The protein belongs to the universal ribosomal protein uL6 family. Part of the 50S ribosomal subunit.

In terms of biological role, this protein binds to the 23S rRNA, and is important in its secondary structure. It is located near the subunit interface in the base of the L7/L12 stalk, and near the tRNA binding site of the peptidyltransferase center. The chain is Large ribosomal subunit protein uL6 from Novosphingobium aromaticivorans (strain ATCC 700278 / DSM 12444 / CCUG 56034 / CIP 105152 / NBRC 16084 / F199).